The primary structure comprises 158 residues: Crossover junction endodeoxyribonuclease RuvC (158 aa).

Active-site residues include Asp-7, Glu-67, and Asp-140. Residues Asp-7, Glu-67, and Asp-140 each contribute to the Mg(2+) site.

It belongs to the RuvC family. In terms of assembly, homodimer which binds Holliday junction (HJ) DNA. The HJ becomes 2-fold symmetrical on binding to RuvC with unstacked arms; it has a different conformation from HJ DNA in complex with RuvA. In the full resolvosome a probable DNA-RuvA(4)-RuvB(12)-RuvC(2) complex forms which resolves the HJ. The cofactor is Mg(2+).

The protein localises to the cytoplasm. The enzyme catalyses Endonucleolytic cleavage at a junction such as a reciprocal single-stranded crossover between two homologous DNA duplexes (Holliday junction).. In terms of biological role, the RuvA-RuvB-RuvC complex processes Holliday junction (HJ) DNA during genetic recombination and DNA repair. Endonuclease that resolves HJ intermediates. Cleaves cruciform DNA by making single-stranded nicks across the HJ at symmetrical positions within the homologous arms, yielding a 5'-phosphate and a 3'-hydroxyl group; requires a central core of homology in the junction. The consensus cleavage sequence is 5'-(A/T)TT(C/G)-3'. Cleavage occurs on the 3'-side of the TT dinucleotide at the point of strand exchange. HJ branch migration catalyzed by RuvA-RuvB allows RuvC to scan DNA until it finds its consensus sequence, where it cleaves and resolves the cruciform DNA. The sequence is that of Crossover junction endodeoxyribonuclease RuvC from Dictyoglomus turgidum (strain DSM 6724 / Z-1310).